The chain runs to 213 residues: Oxidase ustYa (213 aa).

Residues 1–26 form a disordered region; that stretch reads MAERSSNGYKEVPVRQSEESTIAEEE. Residues 48–68 form a helical membrane-spanning segment; sequence AVWFLIALLLLSNIGLLGGLI. An N-linked (GlcNAc...) asparagine glycan is attached at N98. 2 short sequence motifs (HXXHC) span residues 123–127 and 150–154; these read HQLHC and HLMHC.

Belongs to the ustYa family.

It localises to the membrane. Its pathway is mycotoxin biosynthesis. In terms of biological role, oxidase; part of the gene cluster that mediates the biosynthesis of the secondary metabolite ustiloxin B, an antimitotic tetrapeptide. First, ustA is processed by the subtilisin-like endoprotease Kex2 that is outside the ustiloxin B gene cluster, at the C-terminal side of Arg-Lys, after transfer to Golgi apparatus through the endoplasmic reticulum (ER). Cleavage by KEX2 generates 16 peptides YAIG-I to YAIG-XVI. To process the precursor peptide further, at least two peptidases are necessary to cleave the N-terminal and C-terminal sides of the Tyr-Ala-Ile-Gly core peptide which serves as backbone for the synthesis of ustiloxin B, through cyclization and modification of the tyrosine with a non-protein coding amino acid, norvaline. One of the two peptidases must be the serine peptidase ustP; and the other pepdidase is probably ustH. Macrocyclization of the core peptide derived from ustA requires the tyrosinase ustQ, as well as the homologous oxidases ustYa and ustYb, and leads to the production of the first cyclization product N-desmethylustiloxin F. For the formation of N-desmethylustiloxin F, three oxidation steps are required, hydroxylation at the benzylic position, hydroxylation at either the aromatic ring of Tyr or beta-position of Ile, and oxidative cyclization. UstQ may catalyze the oxidation of a phenol moiety, whereas the ustYa and ustYb are most likely responsible for the remaining two-step oxidations. N-desmethylustiloxin F is then methylated by ustM to yield ustiloxin F which in turn substrate of the cytochrome P450 monooxygenase ustC which catalyzes the formation of S-deoxyustiloxin H. The flavoprotein monooxygenases ustF1 and ustF2 then participate in the modification of the side chain of S-deoxyustiloxin H, leading to the synthesis of an oxime intermediate, via ustiloxin H. Finally, carboxylative dehydration performed by the cysteine desulfurase-like protein ustD yields ustiloxin B. The sequence is that of Oxidase ustYa from Aspergillus flavus (strain ATCC 200026 / FGSC A1120 / IAM 13836 / NRRL 3357 / JCM 12722 / SRRC 167).